A 272-amino-acid polypeptide reads, in one-letter code: Zinc transporter ZupT (272 aa).

Helical transmembrane passes span 11–31, 40–60, 76–96, 126–146, 158–178, 189–209, 211–231, and 250–270; these read IALA…LMVV, LLAF…LTEI, LGFT…MVID, LMTA…TFFA, AFAI…PVYF, ASLL…LALF, VLSD…MVFL, and VYGL…FRFA. 2 residues coordinate Fe(2+): asparagine 136 and glutamate 139. Residues glutamate 139 and histidine 164 each coordinate Zn(2+). Fe(2+) contacts are provided by asparagine 165, glutamate 168, and glutamate 197. Glutamate 168 provides a ligand contact to Zn(2+).

Belongs to the ZIP transporter (TC 2.A.5) family. ZupT subfamily.

The protein resides in the cell inner membrane. The catalysed reaction is Zn(2+)(in) = Zn(2+)(out). Its function is as follows. Mediates zinc uptake. May also transport other divalent cations. This chain is Zinc transporter ZupT, found in Xanthomonas axonopodis pv. citri (strain 306).